A 161-amino-acid polypeptide reads, in one-letter code: GTP-dependent dephospho-CoA kinase (161 aa).

GTP is bound by residues Asp-40, Val-41, Val-42, Asp-59, Glu-112, and Glu-135.

This sequence belongs to the GTP-dependent DPCK family.

It catalyses the reaction 3'-dephospho-CoA + GTP = GDP + CoA + H(+). The protein operates within cofactor biosynthesis; coenzyme A biosynthesis. Its function is as follows. Catalyzes the GTP-dependent phosphorylation of the 3'-hydroxyl group of dephosphocoenzyme A to form coenzyme A (CoA). The chain is GTP-dependent dephospho-CoA kinase from Methanocorpusculum labreanum (strain ATCC 43576 / DSM 4855 / Z).